The primary structure comprises 247 residues: Caffeoyl-CoA O-methyltransferase 1 (247 aa).

Residue Lys21 participates in substrate binding. Residues Thr63, Glu85, 87 to 88 (GV), Ser93, Asp111, and Ala140 contribute to the S-adenosyl-L-methionine site. A substrate-binding site is contributed by Asp163. Asp163 provides a ligand contact to a divalent metal cation. Asp165 serves as a coordination point for S-adenosyl-L-methionine. Residues Asp189 and Asn190 each contribute to the a divalent metal cation site. Asn194 contributes to the substrate binding site.

It belongs to the class I-like SAM-binding methyltransferase superfamily. Cation-dependent O-methyltransferase family. CCoAMT subfamily. A divalent metal cation is required as a cofactor.

It carries out the reaction (E)-caffeoyl-CoA + S-adenosyl-L-methionine = (E)-feruloyl-CoA + S-adenosyl-L-homocysteine + H(+). It participates in aromatic compound metabolism; phenylpropanoid biosynthesis. In terms of biological role, methylates caffeoyl-CoA to feruloyl-CoA and 5-hydroxyferuloyl-CoA to sinapoyl-CoA. Plays a role in the synthesis of feruloylated polysaccharides. Involved in the reinforcement of the plant cell wall. Also involved in the responding to wounding or pathogen challenge by the increased formation of cell wall-bound ferulic acid polymers. This Populus trichocarpa (Western balsam poplar) protein is Caffeoyl-CoA O-methyltransferase 1 (CCOAOMT1).